A 220-amino-acid polypeptide reads, in one-letter code: HTH-type transcriptional repressor GlaR (220 aa).

The HTH gntR-type domain occupies 1 to 69; it reads MTITSLDGYR…NQKGYRVASM (69 aa). Positions 29 to 48 form a DNA-binding region, H-T-H motif; sequence MSLLTSRYALGVGPLREALS.

It is found in the cytoplasm. With respect to regulation, the repressive effect at the glaH promoter site is specifically relieved upon glutarate binding. In terms of biological role, negatively regulates the expression of the glaH-lhgD-gabDTP operon in a temporal manner during entry into stationary phase or during the first few hours of carbon starvation. Thereby is involved in the regulation of a L-lysine degradation pathway that proceeds via cadaverine, glutarate and L-2-hydroxyglutarate. Binds to two primary and two secondary sites in the promoter region of the glaH operon with the consensus sequences TTGTN5TTTT and ATGTN5TTTT of the primary sites, each separated by six nucleotides. The chain is HTH-type transcriptional repressor GlaR from Escherichia coli (strain K12).